The sequence spans 216 residues: 3-keto-L-gulonate-6-phosphate decarboxylase UlaD (216 aa).

A substrate-binding site is contributed by Asp11. Glu33 and Asp62 together coordinate Mg(2+). Arg192 is a substrate binding site.

This sequence belongs to the HPS/KGPDC family. KGPDC subfamily. Homodimer. It depends on Mg(2+) as a cofactor.

The catalysed reaction is 3-dehydro-L-gulonate 6-phosphate + H(+) = L-xylulose 5-phosphate + CO2. Its pathway is cofactor degradation; L-ascorbate degradation; D-xylulose 5-phosphate from L-ascorbate: step 2/4. Its function is as follows. Catalyzes the decarboxylation of 3-keto-L-gulonate-6-P into L-xylulose-5-P. Is involved in the anaerobic L-ascorbate utilization. The chain is 3-keto-L-gulonate-6-phosphate decarboxylase UlaD from Shigella boydii serotype 18 (strain CDC 3083-94 / BS512).